We begin with the raw amino-acid sequence, 351 residues long: Protein-glutamate methylesterase/protein-glutamine glutaminase 2 (351 aa).

The region spanning 4-121 (KVLVVDDSAL…PQDFNEYQDL (118 aa)) is the Response regulatory domain. Aspartate 55 is modified (4-aspartylphosphate). The CheB-type methylesterase domain maps to 156–348 (RVINTQLVAI…DKMLNYLASL (193 aa)). Residues serine 168, histidine 194, and aspartate 290 contribute to the active site.

This sequence belongs to the CheB family. In terms of processing, phosphorylated by CheA. Phosphorylation of the N-terminal regulatory domain activates the methylesterase activity.

It is found in the cytoplasm. It catalyses the reaction [protein]-L-glutamate 5-O-methyl ester + H2O = L-glutamyl-[protein] + methanol + H(+). It carries out the reaction L-glutaminyl-[protein] + H2O = L-glutamyl-[protein] + NH4(+). Its function is as follows. Involved in chemotaxis. Part of a chemotaxis signal transduction system that modulates chemotaxis in response to various stimuli. Catalyzes the demethylation of specific methylglutamate residues introduced into the chemoreceptors (methyl-accepting chemotaxis proteins or MCP) by CheR. Also mediates the irreversible deamidation of specific glutamine residues to glutamic acid. The sequence is that of Protein-glutamate methylesterase/protein-glutamine glutaminase 2 from Shewanella sp. (strain MR-7).